The chain runs to 245 residues: MSVNSKLYEGKAKILYTTDDPEVLLADFKDDATAFNAQKRGSIQGKGKINCSISSQLFKQLEAYGIKTHFIDSPTPNQMLVKAVKILPLEVVIRNIAAGSLCQQTGLPVGTILKQPLVEFYYKNDHLGDPLLTRDRLYLLELATAEQVDAITHLALQINEFLNKFWQQCGITLVDFKLEFGLDSQQQLLLADEISPDTCRLWDTTEEDSNRRIMDKDRFRRDLGNVEDAYQEVLQRVLKAVETTN.

It belongs to the SAICAR synthetase family.

The catalysed reaction is 5-amino-1-(5-phospho-D-ribosyl)imidazole-4-carboxylate + L-aspartate + ATP = (2S)-2-[5-amino-1-(5-phospho-beta-D-ribosyl)imidazole-4-carboxamido]succinate + ADP + phosphate + 2 H(+). It functions in the pathway purine metabolism; IMP biosynthesis via de novo pathway; 5-amino-1-(5-phospho-D-ribosyl)imidazole-4-carboxamide from 5-amino-1-(5-phospho-D-ribosyl)imidazole-4-carboxylate: step 1/2. In Nostoc punctiforme (strain ATCC 29133 / PCC 73102), this protein is Phosphoribosylaminoimidazole-succinocarboxamide synthase.